Consider the following 142-residue polypeptide: Hemoglobin larval subunit alpha (142 aa).

In terms of domain architecture, Globin spans 2–142; it reads VLSAEEKALV…VSAVLTSKYR (141 aa). Residue H59 participates in O2 binding. H88 is a heme b binding site.

This sequence belongs to the globin family. In terms of assembly, heterotetramer of two alpha chains and two beta chains. Red blood cells.

Involved in oxygen transport from the lung to the various peripheral tissues. This Pleurodeles waltl (Iberian ribbed newt) protein is Hemoglobin larval subunit alpha.